Reading from the N-terminus, the 120-residue chain is Large ribosomal subunit protein bL12 (120 aa).

This sequence belongs to the bacterial ribosomal protein bL12 family. As to quaternary structure, homodimer. Part of the ribosomal stalk of the 50S ribosomal subunit. Forms a multimeric L10(L12)X complex, where L10 forms an elongated spine to which 2 to 4 L12 dimers bind in a sequential fashion. Binds GTP-bound translation factors.

Functionally, forms part of the ribosomal stalk which helps the ribosome interact with GTP-bound translation factors. Is thus essential for accurate translation. This is Large ribosomal subunit protein bL12 from Listeria innocua serovar 6a (strain ATCC BAA-680 / CLIP 11262).